A 154-amino-acid chain; its full sequence is Prefoldin subunit 5 (154 aa).

Ala2 is subject to N-acetylalanine. N6-acetyllysine is present on Lys42. Residue Ser56 is modified to Phosphoserine.

The protein belongs to the prefoldin subunit alpha family. In terms of assembly, heterohexamer of two PFD-alpha type and four PFD-beta type subunits.

It localises to the nucleus. Functionally, binds specifically to cytosolic chaperonin (c-CPN) and transfers target proteins to it. Binds to nascent polypeptide chain and promotes folding in an environment in which there are many competing pathways for nonnative proteins. Represses the transcriptional activity of MYC. In Pongo abelii (Sumatran orangutan), this protein is Prefoldin subunit 5 (PFDN5).